The following is a 100-amino-acid chain: Mitochondrial zinc maintenance protein 1, mitochondrial (100 aa).

This sequence belongs to the complex I LYR family. MZM1 subfamily. In terms of assembly, interacts with RIP1.

The protein resides in the mitochondrion matrix. Assembly factor required for Rieske Fe-S protein RIP1 incorporation into the cytochrome b-c1 (CIII) complex. Functions as a chaperone, binding to this subunit within the mitochondrial matrix and stabilizing it prior to its translocation and insertion into the late CIII dimeric intermediate within the mitochondrial inner membrane. Modulates the mitochondrial matrix zinc pool. This Schizosaccharomyces pombe (strain 972 / ATCC 24843) (Fission yeast) protein is Mitochondrial zinc maintenance protein 1, mitochondrial (new18).